The following is a 147-amino-acid chain: Ponticulin-like protein C2 (147 aa).

The N-terminal stretch at 1-20 (MKFTKPLLLLIVAIIASSNA) is a signal peptide. Asn-118 carries GPI-like-anchor amidated asparagine lipidation. Residue Asn-118 is glycosylated (N-linked (GlcNAc...) asparagine). Positions 119–147 (SSESDSSDSTRIGASFALFALALLSMLAL) are cleaved as a propeptide — removed in mature form.

Belongs to the ponticulin family. In terms of processing, the GPI-like-anchor contains a phosphoceramide group, rather than a phosphatidyl group.

It is found in the cell membrane. The chain is Ponticulin-like protein C2 (ponC2) from Dictyostelium discoideum (Social amoeba).